A 100-amino-acid chain; its full sequence is Urease subunit gamma (100 aa).

It belongs to the urease gamma subunit family. As to quaternary structure, heterotrimer of UreA (gamma), UreB (beta) and UreC (alpha) subunits. Three heterotrimers associate to form the active enzyme.

It is found in the cytoplasm. The enzyme catalyses urea + 2 H2O + H(+) = hydrogencarbonate + 2 NH4(+). Its pathway is nitrogen metabolism; urea degradation; CO(2) and NH(3) from urea (urease route): step 1/1. This is Urease subunit gamma from Cupriavidus metallidurans (strain ATCC 43123 / DSM 2839 / NBRC 102507 / CH34) (Ralstonia metallidurans).